Here is a 271-residue protein sequence, read N- to C-terminus: Formamidopyrimidine-DNA glycosylase (271 aa).

P2 serves as the catalytic Schiff-base intermediate with DNA. The active-site Proton donor is the E3. Residue K57 is the Proton donor; for beta-elimination activity of the active site. 3 residues coordinate DNA: H90, R109, and K151. Residues 236-270 form an FPG-type zinc finger; the sequence is HVYGRGGETCTSCGNLLSEIRLGQRTTVFCGICQT. Residue R260 is the Proton donor; for delta-elimination activity of the active site.

Belongs to the FPG family. In terms of assembly, monomer. Zn(2+) is required as a cofactor.

It catalyses the reaction Hydrolysis of DNA containing ring-opened 7-methylguanine residues, releasing 2,6-diamino-4-hydroxy-5-(N-methyl)formamidopyrimidine.. The catalysed reaction is 2'-deoxyribonucleotide-(2'-deoxyribose 5'-phosphate)-2'-deoxyribonucleotide-DNA = a 3'-end 2'-deoxyribonucleotide-(2,3-dehydro-2,3-deoxyribose 5'-phosphate)-DNA + a 5'-end 5'-phospho-2'-deoxyribonucleoside-DNA + H(+). In terms of biological role, involved in base excision repair of DNA damaged by oxidation or by mutagenic agents. Acts as a DNA glycosylase that recognizes and removes damaged bases. Has a preference for oxidized purines, such as 7,8-dihydro-8-oxoguanine (8-oxoG). Has AP (apurinic/apyrimidinic) lyase activity and introduces nicks in the DNA strand. Cleaves the DNA backbone by beta-delta elimination to generate a single-strand break at the site of the removed base with both 3'- and 5'-phosphates. The sequence is that of Formamidopyrimidine-DNA glycosylase from Shewanella baltica (strain OS155 / ATCC BAA-1091).